The primary structure comprises 371 residues: 2-aminoethylphosphonate--pyruvate transaminase (371 aa).

K195 is modified (N6-(pyridoxal phosphate)lysine).

Belongs to the class-V pyridoxal-phosphate-dependent aminotransferase family. PhnW subfamily. In terms of assembly, homotetramer; however this is for an enzyme with a molecular weight of 16500, which is in disagreement with the weight of this protein. The cofactor is pyridoxal 5'-phosphate.

The catalysed reaction is (2-aminoethyl)phosphonate + pyruvate = phosphonoacetaldehyde + L-alanine. Inhibited by phosphonic acids and very slightly inhibited by aminophosphonic acids. Functionally, involved in phosphonate degradation. The sequence is that of 2-aminoethylphosphonate--pyruvate transaminase (phnW) from Pseudomonas aeruginosa (strain ATCC 15692 / DSM 22644 / CIP 104116 / JCM 14847 / LMG 12228 / 1C / PRS 101 / PAO1).